The following is a 66-amino-acid chain: MPQLDTSTWLTMILSMFLTLFIIFQLKISKHNFYYNPELTSTKMLKQNTPWETKWTKIYLPLLLPL.

A helical membrane pass occupies residues threonine 8–phenylalanine 24. At lysine 54 the chain carries N6-acetyllysine; alternate. Lysine 54 bears the N6-succinyllysine; alternate mark. The residue at position 57 (lysine 57) is an N6-acetyllysine.

The protein belongs to the ATPase protein 8 family. Component of the ATP synthase complex composed at least of ATP5F1A/subunit alpha, ATP5F1B/subunit beta, ATP5MC1/subunit c (homooctomer), MT-ATP6/subunit a, MT-ATP8/subunit 8, ATP5ME/subunit e, ATP5MF/subunit f, ATP5MG/subunit g, ATP5MK/subunit k, ATP5MJ/subunit j, ATP5F1C/subunit gamma, ATP5F1D/subunit delta, ATP5F1E/subunit epsilon, ATP5PF/subunit F6, ATP5PB/subunit b, ATP5PD/subunit d, ATP5PO/subunit OSCP. ATP synthase complex consists of a soluble F(1) head domain (subunits alpha(3) and beta(3)) - the catalytic core - and a membrane F(0) domain - the membrane proton channel (subunits c, a, 8, e, f, g, k and j). These two domains are linked by a central stalk (subunits gamma, delta, and epsilon) rotating inside the F1 region and a stationary peripheral stalk (subunits F6, b, d, and OSCP). Interacts with PRICKLE3.

Its subcellular location is the mitochondrion membrane. Its function is as follows. Subunit 8, of the mitochondrial membrane ATP synthase complex (F(1)F(0) ATP synthase or Complex V) that produces ATP from ADP in the presence of a proton gradient across the membrane which is generated by electron transport complexes of the respiratory chain. ATP synthase complex consist of a soluble F(1) head domain - the catalytic core - and a membrane F(1) domain - the membrane proton channel. These two domains are linked by a central stalk rotating inside the F(1) region and a stationary peripheral stalk. During catalysis, ATP synthesis in the catalytic domain of F(1) is coupled via a rotary mechanism of the central stalk subunits to proton translocation. In vivo, can only synthesize ATP although its ATP hydrolase activity can be activated artificially in vitro. Part of the complex F(0) domain. This is ATP synthase F(0) complex subunit 8 from Bos mutus grunniens (Wild yak).